The sequence spans 99 residues: Prostate and testis expressed protein 14 (99 aa).

An N-terminal signal peptide occupies residues Met-1–Ala-21. Residues Leu-22 to Phe-99 enclose the UPAR/Ly6 domain. 5 disulfide bridges follow: Cys-24-Cys-51, Cys-27-Cys-36, Cys-43-Cys-69, Cys-73-Cys-89, and Cys-90-Cys-96. N-linked (GlcNAc...) asparagine glycosylation is present at Asn-40. Asn-75 and Asn-82 each carry an N-linked (GlcNAc...) asparagine glycan.

The protein belongs to the PATE family. In terms of assembly, monomer.

The protein resides in the secreted. The protein is Prostate and testis expressed protein 14 of Rattus norvegicus (Rat).